The primary structure comprises 494 residues: Glycerol kinase (494 aa).

Threonine 13 is a binding site for ADP. The ATP site is built by threonine 13, threonine 14, and serine 15. Threonine 13 contacts sn-glycerol 3-phosphate. Arginine 17 provides a ligand contact to ADP. Sn-glycerol 3-phosphate-binding residues include arginine 83, glutamate 84, tyrosine 135, and aspartate 244. Glycerol contacts are provided by arginine 83, glutamate 84, tyrosine 135, aspartate 244, and glutamine 245. The ADP site is built by threonine 266 and glycine 309. Residues threonine 266, glycine 309, glutamine 313, and glycine 410 each contribute to the ATP site. Residues glycine 410 and asparagine 414 each contribute to the ADP site.

It belongs to the FGGY kinase family.

It catalyses the reaction glycerol + ATP = sn-glycerol 3-phosphate + ADP + H(+). Its pathway is polyol metabolism; glycerol degradation via glycerol kinase pathway; sn-glycerol 3-phosphate from glycerol: step 1/1. With respect to regulation, inhibited by fructose 1,6-bisphosphate (FBP). Key enzyme in the regulation of glycerol uptake and metabolism. Catalyzes the phosphorylation of glycerol to yield sn-glycerol 3-phosphate. The chain is Glycerol kinase from Shewanella baltica (strain OS195).